We begin with the raw amino-acid sequence, 976 residues long: Mast/stem cell growth factor receptor Kit (976 aa).

The N-terminal stretch at methionine 1–serine 25 is a signal peptide. Topologically, residues glutamine 26–proline 524 are extracellular. 5 Ig-like C2-type domains span residues proline 27–arginine 112, aspartate 121–arginine 205, proline 212–valine 308, proline 317–asparagine 410, and proline 413–alanine 507. Cysteine 58 and cysteine 97 form a disulfide bridge. 2 N-linked (GlcNAc...) asparagine glycosylation sites follow: asparagine 130 and asparagine 145. Intrachain disulfides connect cysteine 136-cysteine 186, cysteine 151-cysteine 183, and cysteine 233-cysteine 290. N-linked (GlcNAc...) asparagine glycosylation is found at asparagine 283, asparagine 293, asparagine 300, asparagine 320, asparagine 352, asparagine 367, asparagine 463, and asparagine 486. Cysteines 428 and 491 form a disulfide. A helical membrane pass occupies residues leucine 525 to tyrosine 545. At lysine 546–valine 976 the chain is on the cytoplasmic side. Residues tyrosine 547, tyrosine 553, tyrosine 568, and tyrosine 570 each carry the phosphotyrosine; by autocatalysis modification. Tyrosine 568 lines the Mg(2+) pocket. Residues tyrosine 568–tyrosine 570 form an important for interaction with phosphotyrosine-binding proteins region. One can recognise a Protein kinase domain in the interval leucine 589–serine 937. Residues glycine 596 to valine 603, lysine 623, and glutamate 671 to aspartate 677 each bind ATP. 3 positions are modified to phosphotyrosine; by autocatalysis: tyrosine 703, tyrosine 721, and tyrosine 730. Serine 741 and serine 746 each carry phosphoserine; by PKC/PRKCA. Aspartate 792 (proton acceptor) is an active-site residue. Arginine 796 is a binding site for ATP. 2 residues coordinate Mg(2+): asparagine 797 and aspartate 810. A Phosphoserine modification is found at serine 821. A Phosphotyrosine; by autocatalysis modification is found at tyrosine 823. A Phosphoserine modification is found at serine 891. Phosphotyrosine; by autocatalysis occurs at positions 900 and 936. Position 959 is a phosphoserine (serine 959).

It belongs to the protein kinase superfamily. Tyr protein kinase family. CSF-1/PDGF receptor subfamily. In terms of assembly, monomer in the absence of bound KITLG/SCF. Homodimer in the presence of bound KITLG/SCF, forming a heterotetramer with two KITLG/SCF molecules. Interacts (via phosphorylated tyrosine residues) with the adapter proteins GRB2 and GRB7 (via SH2 domain), and SH2B2/APS. Interacts (via C-terminus) with MPDZ (via the tenth PDZ domain). Interacts (via phosphorylated tyrosine residues) with PIK3R1 and PIK3 catalytic subunit. Interacts (via phosphorylated tyrosine) with CRK (isoform Crk-II), FYN, SHC1 and MATK/CHK (via SH2 domain). Interacts with LYN and FES/FPS. Interacts (via phosphorylated tyrosine residues) with the protein phosphatases PTPN6/SHP-1 (via SH2 domain), PTPN11/SHP-2 (via SH2 domain) and PTPRU. Interacts with PLCG1. Interacts with DOK1 and TEC. Interacts (KITLG/SCF-bound) with IL1RL1. Interacts with IL1RAP (independent of stimulation with KITLG/SCF). A mast cell-specific KITLG/SCF-induced interleukin-33 signaling complex contains IL1RL1, IL1RAP, KIT and MYD88. Ubiquitinated by SOCS6. KIT is rapidly ubiquitinated after autophosphorylation induced by KITLG/SCF binding, leading to internalization and degradation. In terms of processing, autophosphorylated on tyrosine residues. KITLG/SCF binding enhances autophosphorylation. Isoform 1 shows low levels of tyrosine phosphorylation in the absence of added KITLG/SCF (in vitro). Kinase activity is down-regulated by phosphorylation on serine residues by protein kinase C family members. Phosphorylation at Tyr-568 is required for interaction with PTPN11/SHP-2, CRK (isoform Crk-II) and members of the SRC tyrosine-protein kinase family. Phosphorylation at Tyr-570 is required for interaction with PTPN6/SHP-1. Phosphorylation at Tyr-703, Tyr-823 and Tyr-936 is important for interaction with GRB2. Phosphorylation at Tyr-721 is important for interaction with PIK3R1. Phosphorylation at Tyr-823 and Tyr-936 is important for interaction with GRB7. As to expression, in testis, detected in spermatogonia in the basal layer and in interstitial Leydig cells but not in Sertoli cells or spermatocytes inside the seminiferous tubules (at protein level). Expression is maintained in ejaculated spermatozoa (at protein level).

Its subcellular location is the cell membrane. The protein resides in the cytoplasm. It catalyses the reaction L-tyrosyl-[protein] + ATP = O-phospho-L-tyrosyl-[protein] + ADP + H(+). With respect to regulation, present in an inactive conformation in the absence of bound ligand. KITLG/SCF binding leads to dimerization and activation by autophosphorylation on tyrosine residues. Activity is down-regulated by PRKCA-mediated phosphorylation on serine residues. Inhibited by imatinib/STI-571 (Gleevec) and sunitinib; these compounds maintain the kinase in an inactive conformation. Tyrosine-protein kinase that acts as a cell-surface receptor for the cytokine KITLG/SCF and plays an essential role in the regulation of cell survival and proliferation, hematopoiesis, stem cell maintenance, gametogenesis, mast cell development, migration and function, and in melanogenesis. In response to KITLG/SCF binding, KIT can activate several signaling pathways. Phosphorylates PIK3R1, PLCG1, SH2B2/APS and CBL. Activates the AKT1 signaling pathway by phosphorylation of PIK3R1, the regulatory subunit of phosphatidylinositol 3-kinase. Activated KIT also transmits signals via GRB2 and activation of RAS, RAF1 and the MAP kinases MAPK1/ERK2 and/or MAPK3/ERK1. Promotes activation of STAT family members STAT1, STAT3, STAT5A and STAT5B. Activation of PLCG1 leads to the production of the cellular signaling molecules diacylglycerol and inositol 1,4,5-trisphosphate. KIT signaling is modulated by protein phosphatases, and by rapid internalization and degradation of the receptor. Activated KIT promotes phosphorylation of the protein phosphatases PTPN6/SHP-1 and PTPRU, and of the transcription factors STAT1, STAT3, STAT5A and STAT5B. Promotes phosphorylation of PIK3R1, CBL, CRK (isoform Crk-II), LYN, MAPK1/ERK2 and/or MAPK3/ERK1, PLCG1, SRC and SHC1. The chain is Mast/stem cell growth factor receptor Kit (KIT) from Homo sapiens (Human).